The primary structure comprises 249 residues: tRNA (guanine-N(1)-)-methyltransferase (249 aa).

S-adenosyl-L-methionine is bound by residues glycine 113 and 132-137 (VGDFVV).

The protein belongs to the RNA methyltransferase TrmD family. In terms of assembly, homodimer.

Its subcellular location is the cytoplasm. The catalysed reaction is guanosine(37) in tRNA + S-adenosyl-L-methionine = N(1)-methylguanosine(37) in tRNA + S-adenosyl-L-homocysteine + H(+). In terms of biological role, specifically methylates guanosine-37 in various tRNAs. The protein is tRNA (guanine-N(1)-)-methyltransferase of Desulforudis audaxviator (strain MP104C).